The chain runs to 223 residues: Ubiquinone biosynthesis protein COQ4 homolog 2, mitochondrial (223 aa).

The N-terminal 26 residues, 1 to 26 (MFLRRVHPVRLGHAIQRSLTTTKSRN), are a transit peptide targeting the mitochondrion. Positions 21 to 32 (TTKSRNESTTTT) are enriched in low complexity. The disordered stretch occupies residues 21 to 43 (TTKSRNESTTTTVEAPQAVPSPP). Zn(2+) is bound by residues His-177, Asp-178, His-181, and Glu-193.

Belongs to the COQ4 family. Component of a multi-subunit COQ enzyme complex. Zn(2+) serves as cofactor.

The protein localises to the mitochondrion inner membrane. The enzyme catalyses a 4-hydroxy-3-methoxy-5-(all-trans-polyprenyl)benzoate + H(+) = a 2-methoxy-6-(all-trans-polyprenyl)phenol + CO2. Its pathway is cofactor biosynthesis; ubiquinone biosynthesis. Its function is as follows. Lyase that catalyzes the C1-decarboxylation of 4-hydroxy-3-methoxy-5-(all-trans-polyprenyl)benzoic acid into 2-methoxy-6-(all-trans-polyprenyl)phenol during ubiquinone biosynthesis. In Culex quinquefasciatus (Southern house mosquito), this protein is Ubiquinone biosynthesis protein COQ4 homolog 2, mitochondrial.